A 386-amino-acid polypeptide reads, in one-letter code: 2,3,4,5-tetrahydropyridine-2,6-dicarboxylate N-succinyltransferase (386 aa).

Catalysis depends on Glu-257, which acts as the Acyl-anhydride intermediate. Residues Arg-259, Gly-274, Ser-277, Ala-300, 315–316, Gly-323, Lys-349, and 362–365 contribute to the succinyl-CoA site; these read DA and RQDS.

The protein belongs to the type 2 tetrahydrodipicolinate N-succinyltransferase family. As to quaternary structure, homotrimer.

The protein localises to the cytoplasm. It catalyses the reaction (S)-2,3,4,5-tetrahydrodipicolinate + succinyl-CoA + H2O = (S)-2-succinylamino-6-oxoheptanedioate + CoA. It functions in the pathway amino-acid biosynthesis; L-lysine biosynthesis via DAP pathway; LL-2,6-diaminopimelate from (S)-tetrahydrodipicolinate (succinylase route): step 1/3. Functionally, catalyzes the conversion of the cyclic tetrahydrodipicolinate (THDP) into the acyclic N-succinyl-L-2-amino-6-oxopimelate using succinyl-CoA. In Campylobacter jejuni subsp. jejuni serotype O:2 (strain ATCC 700819 / NCTC 11168), this protein is 2,3,4,5-tetrahydropyridine-2,6-dicarboxylate N-succinyltransferase.